Here is a 192-residue protein sequence, read N- to C-terminus: PTS-dependent dihydroxyacetone kinase, ADP-binding subunit DhaL (192 aa).

The DhaL domain maps to 5–189; it reads DTTIEWLGKF…SAYLFETLLE (185 aa). Mg(2+) is bound by residues D29, D34, and D36. ADP contacts are provided by residues 37–40, 78–79, G115, M124, R161, and 174–176; these read HGAN, AS, and DPG.

Homodimer. The dihydroxyacetone kinase complex is composed of a homodimer of DhaM, a homodimer of DhaK and the subunit DhaL. It depends on Mg(2+) as a cofactor.

Its subcellular location is the cytoplasm. The catalysed reaction is dihydroxyacetone + phosphoenolpyruvate = dihydroxyacetone phosphate + pyruvate. It functions in the pathway polyol metabolism; glycerol degradation. Its function is as follows. ADP-binding subunit of the dihydroxyacetone kinase, which is responsible for the phosphoenolpyruvate (PEP)-dependent phosphorylation of dihydroxyacetone. DhaL-ADP is converted to DhaL-ATP via a phosphoryl group transfer from DhaM and transmits it to dihydroxyacetone binds to DhaK. The sequence is that of PTS-dependent dihydroxyacetone kinase, ADP-binding subunit DhaL from Lactococcus lactis subsp. lactis (strain IL1403) (Streptococcus lactis).